The primary structure comprises 182 residues: CASP-like protein 5A1 (182 aa).

The Cytoplasmic portion of the chain corresponds to 1 to 47 (MEMASHPAVHPVALPPPYQAVGPPAPPAVRINDFPGSPGTLMGLALR). A helical transmembrane segment spans residues 48-68 (FAQLGFALTALCIMVSIVGFS). Residues 69 to 72 (SVTA) lie on the Extracellular side of the membrane. Residues 73 to 93 (FCFLVAAMVLQCIWSLCLGVL) traverse the membrane as a helical segment. Residues 94–117 (DCYALLTKRSLRNSLILSFFVVGD) are Cytoplasmic-facing. The helical transmembrane segment at 118–138 (WITSTMTFAGACAAAGITVLI) threads the bilayer. The Extracellular segment spans residues 139-158 (DNDLNQCGPNHCNRFEAAAA). The chain crosses the membrane as a helical span at residues 159 to 179 (MAFMSWVITTISFFLSFWILV). Residues 180–182 (TCR) lie on the Cytoplasmic side of the membrane.

It belongs to the Casparian strip membrane proteins (CASP) family. As to quaternary structure, homodimer and heterodimers.

The protein resides in the cell membrane. This chain is CASP-like protein 5A1, found in Physcomitrium patens (Spreading-leaved earth moss).